Reading from the N-terminus, the 340-residue chain is Fructoselysine 6-phosphate deglycase (340 aa).

SIS domains follow at residues 35-169 and 201-331; these read IVEE…RLAP and LGEL…PDER.

Homododecamer.

It catalyses the reaction N(6)-(6-phospho-D-fructosyl)-L-lysine + H2O = D-glucose 6-phosphate + L-lysine. It functions in the pathway carbohydrate metabolism; fructoselysine degradation; D-glucose 6-phosphate and lysine from fructoselysine: step 2/2. With respect to regulation, strongly inhibited by ZnCl(2). In terms of biological role, catalyzes the reversible conversion of fructoselysine 6-phosphate to glucose 6-phosphate and lysine. Functions in a fructoselysine degradation pathway that allows E.coli to grow on fructoselysine or psicoselysine. The polypeptide is Fructoselysine 6-phosphate deglycase (Escherichia coli (strain K12)).